Reading from the N-terminus, the 497-residue chain is Delayed-rectifier potassium channel regulatory subunit KCNS1 (497 aa).

Over 1 to 186 (MVSEFPGPGS…LTMENPGYSL (186 aa)) the chain is Cytoplasmic. A helical transmembrane segment spans residues 187-208 (PSKLFSCVSIGVVLASIAAMCI). The Extracellular segment spans residues 209–239 (HSLPEYQAREAAAAVAAVAAGRSAEDVRDDP). The chain crosses the membrane as a helical span at residues 240 to 262 (VLRRLEYFCIAWFSFEVSSRLLL). Residues 263–273 (APSTRNFFCHP) are Cytoplasmic-facing. Residues 274-291 (LNLIDIVSVLPFYLTLLA) form a helical membrane-spanning segment. Residues 292 to 309 (GAALGDRRGASGEELGDL) lie on the Extracellular side of the membrane. Residues 310–330 (GKVVQVFRLMRIFRVLKLARH) traverse the membrane as a helical; Voltage-sensor segment. Residues 331 to 345 (STGLRSLGATLKHSY) are Cytoplasmic-facing. The chain crosses the membrane as a helical span at residues 346–367 (REVGILLLYLAVGVSVFSGVAY). Topologically, residues 368-379 (TAEEKNVGFDTI) are extracellular. The segment at residues 380 to 391 (PACWWWGTVSMT) is an intramembrane region (helical). The Selectivity filter motif lies at 392–397 (TVGYGD). Residues 392–399 (TVGYGDVV) lie within the membrane without spanning it. The Extracellular segment spans residues 400 to 406 (PETVAGK). Residues 407 to 435 (LAASGCILGGILVVALPITIIFNKFSHFY) form a helical membrane-spanning segment. Residues 436–497 (RRQKALEAAV…PSEPAKSHSY (62 aa)) are Cytoplasmic-facing. The segment at 464 to 497 (SDVSLETSRETSQEGRSTDLETQAPSEPAKSHSY) is disordered. Positions 470–482 (TSRETSQEGRSTD) are enriched in basic and acidic residues.

Belongs to the potassium channel family. S (TC 1.A.1.2) subfamily. Kv9.1/KCNS1 sub-subfamily. In terms of assembly, heterotetramer with KCNB1. Heterotetramer with KCNB2. Does not form homomultimers. Highly expressed in brain, but not in the other tissues tested.

It localises to the cell membrane. Functionally, potassium channel regulatory subunit that modulate the delayed rectifier voltage-gated potassium channel activity of KCNB1 and KCNB2 by altering their kinetics, expression levels, and shifting the half-inactivation potential to more polarized values. While it does not form functional channels on its own, it can form functional heterotetrameric channels with KCNB1 and KCNB2. Each regulatory subunit has unique regulatory properties that can lead to extensive inhibition, significant changes in kinetics, and/or substantial shifts in the voltage dependencies of the inactivation process. This is Delayed-rectifier potassium channel regulatory subunit KCNS1 from Rattus norvegicus (Rat).